Here is a 207-residue protein sequence, read N- to C-terminus: Fibroblast growth factor 18 (207 aa).

The signal sequence occupies residues 1–27 (MYSAPSACTCLCLHFLLLCFQVQVLAA). An N-linked (GlcNAc...) asparagine glycan is attached at Asn-39. Residues Cys-109 and Cys-127 are joined by a disulfide bond. The N-linked (GlcNAc...) asparagine glycan is linked to Asn-137. The interval 157–183 (GRPRKGPKTRENQQDVHFMKRYPKGQT) is disordered. Positions 164–174 (KTRENQQDVHF) are enriched in basic and acidic residues.

This sequence belongs to the heparin-binding growth factors family. In terms of assembly, interacts with FGFR3 and FGFR4. In terms of tissue distribution, mainly expressed in the lung. Not detected in brain, heart, liver, kidney and small intestine.

It localises to the secreted. Its function is as follows. Plays an important role in the regulation of cell proliferation, cell differentiation and cell migration. Required for normal ossification and bone development. Stimulates hepatic and intestinal proliferation. The chain is Fibroblast growth factor 18 (Fgf18) from Rattus norvegicus (Rat).